Reading from the N-terminus, the 65-residue chain is Large ribosomal subunit protein uL29 (65 aa).

This sequence belongs to the universal ribosomal protein uL29 family.

The sequence is that of Large ribosomal subunit protein uL29 from Acinetobacter baylyi (strain ATCC 33305 / BD413 / ADP1).